The chain runs to 375 residues: DNA replication and repair protein RecF (375 aa).

30–37 (GENAQGKT) is an ATP binding site.

It belongs to the RecF family.

It localises to the cytoplasm. In terms of biological role, the RecF protein is involved in DNA metabolism; it is required for DNA replication and normal SOS inducibility. RecF binds preferentially to single-stranded, linear DNA. It also seems to bind ATP. This chain is DNA replication and repair protein RecF, found in Bacillus cereus (strain B4264).